We begin with the raw amino-acid sequence, 99 residues long: MTSALTQGLERIPDQLGYLVLSEGAVLASSGDLENDEQAASAISELVSTACGFRLHQGMSVPFKRLSVVFGEHTLLVTVSGQRVFVVKRQNRGREPIDV.

N-acetylmethionine is present on methionine 1. Threonine 2 bears the N-acetylthreonine; in Ragulator complex protein LAMTOR4, N-terminally processed mark. The residue at position 67 (serine 67) is a Phosphoserine.

This sequence belongs to the LAMTOR4 family. As to quaternary structure, part of the Ragulator complex composed of LAMTOR1, LAMTOR2, LAMTOR3, LAMTOR4 and LAMTOR5. LAMTOR4 and LAMTOR5 form a heterodimer that interacts, through LAMTOR1, with a LAMTOR2, LAMTOR3 heterodimer. The Ragulator complex interacts with both the mTORC1 complex and heterodimers constituted of the Rag GTPases RagA/RRAGA, RagB/RRAGB, RagC/RRAGC and RagD/RRAGD; regulated by amino acid availability. The Ragulator complex interacts with SLC38A9; the probable amino acid sensor. Component of the lysosomal folliculin complex (LFC), composed of FLCN, FNIP1 (or FNIP2), RagA/RRAGA or RagB/RRAGB GDP-bound, RagC/RRAGC or RagD/RRAGD GTP-bound, and Ragulator. Phosphorylation at Ser-67 by PKA inhibits Ragulator complex assembly.

The protein localises to the lysosome. Functionally, as part of the Ragulator complex it is involved in amino acid sensing and activation of mTORC1, a signaling complex promoting cell growth in response to growth factors, energy levels, and amino acids. Activated by amino acids through a mechanism involving the lysosomal V-ATPase, the Ragulator plays a dual role for the small GTPases Rag (RagA/RRAGA, RagB/RRAGB, RagC/RRAGC and/or RagD/RRAGD): it (1) acts as a guanine nucleotide exchange factor (GEF), activating the small GTPases Rag and (2) mediates recruitment of Rag GTPases to the lysosome membrane. Activated Ragulator and Rag GTPases function as a scaffold recruiting mTORC1 to lysosomes where it is in turn activated. The sequence is that of Ragulator complex protein LAMTOR4 (LAMTOR4) from Bos taurus (Bovine).